A 393-amino-acid chain; its full sequence is Phosphoglycerate kinase (393 aa).

Residues 21–23 (DFN), Arg37, 60–63 (HLGR), Arg119, and Arg152 contribute to the substrate site. ATP contacts are provided by residues Lys202, Gly291, Glu322, and 348-351 (GGDT).

This sequence belongs to the phosphoglycerate kinase family. As to quaternary structure, monomer.

The protein resides in the cytoplasm. The catalysed reaction is (2R)-3-phosphoglycerate + ATP = (2R)-3-phospho-glyceroyl phosphate + ADP. It functions in the pathway carbohydrate degradation; glycolysis; pyruvate from D-glyceraldehyde 3-phosphate: step 2/5. The polypeptide is Phosphoglycerate kinase (Coprothermobacter proteolyticus (strain ATCC 35245 / DSM 5265 / OCM 4 / BT)).